The primary structure comprises 372 residues: MATLCRPAIAVPEHVITMQQTLDLARETHAGHPQRDLVLRLIQNTGVQTRHLVQPIEKTLAHPGFEVRNQVYEAEAKTRVPEVVRRALANAETEPSEIDLIVYVSCTGFMMPSLTAWIINSMGFRPETRQLPIAQLGCAAGGAAINRAHDFCVAYPDSNVLIVSCEFCSLCYQPTDIGVGSLLSNGLFGDALSAAVVRGQGGTGMRLERNGSHLVPDTEDWISYAVRDTGFHFQLDKRVPGTMEMLAPVLLDLVDLHGWSVPNMDFFIVHAGGPRILDDLCHFLDLPPEMFRYSRATLTERGNIASSVVFDALARLFDDGGAAESAQGLIAGFGPGITAEVAVGSWAKEGLGADVGRDLDELELTAGVALSG.

Residue C138 is part of the active site.

The protein belongs to the thiolase-like superfamily. Chalcone/stilbene synthases family. As to quaternary structure, homodimer.

The enzyme catalyses 5 malonyl-CoA + 5 H(+) = naphthalene-1,3,6,8-tetrol + 5 CO2 + 5 CoA + H2O. It participates in pigment biosynthesis; melanin biosynthesis. Involved in the biosynthesis of melanin but also various secondary metabolites containing a naphthoquinone ring. Catalyzes the iterative condensation of five CoA-linked malonyl units to form a pentaketide intermediate. THNS subsequently catalyzes the dual intramolecular Claisen and aldol condensations of this linear intermediate to produce the fused ring of 1,3,6,8-tetrahydroxynaphthalene (THN). The protein is 1,3,6,8-tetrahydroxynaphthalene synthase of Streptomyces griseus.